The chain runs to 1044 residues: Diacylglycerol lipase-alpha (1044 aa).

Residues 1–22 (MPGIVVFRRRWSVGSDDLVLPA) are Cytoplasmic-facing. The helical transmembrane segment at 23-43 (IFLFLLHTTWFVILSVVLFGL) threads the bilayer. Over 44–60 (VYNPHEACSLNLVDHGR) the chain is Extracellular. A helical transmembrane segment spans residues 61-81 (GYLGILLSCMIAEMAIIWLSM). Residues 82-101 (RGGILYTEPRDSMQYVLYVR) are Cytoplasmic-facing. A helical transmembrane segment spans residues 102-122 (LAILVIEFIYAIVGIVWLTQY). Residues 123-136 (YTSCNDLTAKNVTL) are Extracellular-facing. N-linked (GlcNAc...) asparagine glycosylation is present at N133. The helical transmembrane segment at 137-157 (GMVVCNWVVILSVCITVLCVF) threads the bilayer. The Cytoplasmic portion of the chain corresponds to 158 to 1044 (DPTGRTFVKL…KQDDLVISAR (887 aa)). Catalysis depends on charge relay system residues S472 and D524. Residues S728, S730, S733, S744, S784, S786, S808, S810, S835, S849, and S954 each carry the phosphoserine modification. A disordered region spans residues 848–897 (LSKHSQDTQPLEAALGSGGVTPERPPSATIEEEEAAGGSEGGGVAPRGEL). Positions 1013–1044 (QECLATDKIRTSTPTGHGASPTKQDDLVISAR) are disordered. A Phosphothreonine modification is found at T1025.

Belongs to the AB hydrolase superfamily. Lipase family. As to quaternary structure, interacts (via C-terminal) with CAMK2A; leading to the phosphorylation and inhibition of DAGLA enzymatic activity. Interacts (via PPXXF motif) with HOMER1 and HOMER2; this interaction is required for DAGLA membrane localization. Requires Ca(2+) as cofactor. Phosphorylated at Ser-784 and Ser-810 by CAMK2A; phosphorylation by CAMK2A inhibits diacylglycerol lipase activity. Highly expressed by principal cells in the hippocampus. In embryonic brains, it is present in axonal tracts, while in adults it localizes to dendritic fields, correlating with the developmental change in requirement for 2-AG synthesis from the pre- to the postsynaptic compartment. Concentrated in heads of dendritic spines throughout the hippocampal formation. Highly compartmentalized into a wide perisynaptic annulus around the postsynaptic density of axospinous contacts but not intrasynaptically (at protein level).

It is found in the cell membrane. The protein resides in the cell projection. Its subcellular location is the dendritic spine membrane. It localises to the postsynaptic density membrane. The protein localises to the early endosome membrane. It catalyses the reaction a 1,2-diacyl-sn-glycerol + H2O = a 2-acylglycerol + a fatty acid + H(+). It carries out the reaction 1-octadecanoyl-2-(5Z,8Z,11Z,14Z-eicosatetraenoyl)-sn-glycerol + H2O = 2-(5Z,8Z,11Z,14Z-eicosatetraenoyl)-glycerol + octadecanoate + H(+). The catalysed reaction is 1,2-di-(9Z-octadecenoyl)-sn-glycerol + H2O = 2-(9Z-octadecenoyl)-glycerol + (9Z)-octadecenoate + H(+). The enzyme catalyses 1-(9Z-octadecenoyl)-2-(5Z,8Z,11Z,14Z-eicosatetraenoyl)-sn-glycerol + H2O = 2-(5Z,8Z,11Z,14Z-eicosatetraenoyl)-glycerol + (9Z)-octadecenoate + H(+). It catalyses the reaction 1-(9Z-octadecenoyl)-2-octadecanoyl-sn-glycerol + H2O = 2-octadecanoylglycerol + (9Z)-octadecenoate + H(+). It carries out the reaction 1-(9Z-octadecenoyl)-2-(9Z,12Z-octadecadienoyl)-sn-glycerol + H2O = 2-(9Z,12Z-octadecadienoyl)-glycerol + (9Z)-octadecenoate + H(+). The catalysed reaction is 1-(9Z-octadecenoyl)-2-O-(5Z,8Z,11Z,14Z-eicosatetraenyl)-sn-glycerol + H2O = 2-O-(5Z,8Z,11Z,14Z)-eicosatetraenylglycerol + (9Z)-octadecenoate + H(+). Inhibited by 1,2,3-triazole urea covalent inhibitor KT172, DH376 and DO34. Inhibited by p-hydroxy-mercuri-benzoate and HgCl(2), but not to PMSF. Also inhibited by RHC80267. Diacylglycerol lipase activity is inhibited by the phosphorylation of Ser-784 and Ser-810 by CAMK2A. In terms of biological role, serine hydrolase that hydrolyzes arachidonic acid-esterified diacylglycerols (DAGs) to produce the principal endocannabinoid (eCB), 2-arachidonoylglycerol (2-AG). Preferentially hydrolyzes sn-1 fatty acids from diacylglycerols (DAG) that contain arachidonic acid (AA) esterified at the sn-2 position to biosynthesize 2-AG. Has negligible activity against other lipids including monoacylglycerols and phospholipids. Plays a key role in regulating 2-AG signaling in the central nervous system (CNS). Controls the activity of 2-AG as a retrograde messenger at neuronal synapses. Supports axonal growth during development and adult neurogenesis. Plays a role for eCB signaling in the physiological regulation of anxiety and depressive behaviors. Also regulates neuroinflammatory responses in the brain, in particular, LPS-induced microglial activation. This is Diacylglycerol lipase-alpha (Dagla) from Mus musculus (Mouse).